Consider the following 2271-residue polypeptide: Serine-rich adhesin for platelets (2271 aa).

An N-terminal signal peptide occupies residues 1 to 89 (MSKRQKAFHD…VNMLHDQQAF (89 aa)). Residues 90–230 (AASDAPLTSE…KTSTTSTSTA (141 aa)) are serine-rich repeat region 1, SRR1. The span at 100-111 (LNTQSETVGNQN) shows a compositional bias: polar residues. 3 disordered regions span residues 100–229 (LNTQ…STST), 751–791 (NSMS…VVST), and 806–2243 (SVSA…GLLG). Positions 112–128 (STTIEASTSTADSTSVT) are enriched in low complexity. Positions 129-140 (KNSSSVQTSNSD) are enriched in polar residues. Low complexity predominate over residues 150 to 229 (VTSTTNSTSN…NKTSTTSTST (80 aa)). The interval 231–751 (PVKLRTFSRL…TTFKYEVTRN (521 aa)) is non-repeat region (NRR). Low complexity-rich tracts occupy residues 752 to 791 (SMSD…VVST), 806 to 1392 (SVSA…LSLS), and 1402 to 2214 (SNSA…ATSE). Residues 752-2232 (SMSDSVSTSG…AQSEKRLPDT (1481 aa)) are serine-rich repeat region 2, SRR2. The LPXTG sorting signal motif lies at 2229 to 2233 (LPDTG). Residue T2232 is modified to Pentaglycyl murein peptidoglycan amidated threonine. A propeptide spans 2233-2271 (GDSIKQNGLLGGVMTLLVGLGLMKRKKKKDENDQDDSQA) (removed by sortase).

The protein belongs to the serine-rich repeat protein (SRRP) family. Post-translationally, proteolytically cleaved by a metalloprotease. In terms of processing, glycosylated. It is probable that most of the Ser residues in SSR1 and SSR2 are O-GlcNAcylated. Sequential glycosylation by sugar transferases are able to generate complex sugar polymorphisms.

The protein localises to the secreted. Its subcellular location is the cell wall. Functionally, mediates binding to human platelets, possibly through a receptor-ligand interaction. Probably associated with virulence in endovascular infection. The polypeptide is Serine-rich adhesin for platelets (sraP) (Staphylococcus aureus (strain USA300)).